The sequence spans 91 residues: Small ribosomal subunit protein uS19 (91 aa).

This sequence belongs to the universal ribosomal protein uS19 family.

Functionally, protein S19 forms a complex with S13 that binds strongly to the 16S ribosomal RNA. The chain is Small ribosomal subunit protein uS19 from Leptothrix cholodnii (strain ATCC 51168 / LMG 8142 / SP-6) (Leptothrix discophora (strain SP-6)).